A 129-amino-acid polypeptide reads, in one-letter code: Glycine cleavage system H protein (129 aa).

A Lipoyl-binding domain is found at 24 to 106 (IAVIGITAYA…YGDGWLIKVR (83 aa)). K65 carries the N6-lipoyllysine modification.

The protein belongs to the GcvH family. In terms of assembly, the glycine cleavage system is composed of four proteins: P, T, L and H. (R)-lipoate serves as cofactor.

Functionally, the glycine cleavage system catalyzes the degradation of glycine. The H protein shuttles the methylamine group of glycine from the P protein to the T protein. In Synechococcus sp. (strain JA-2-3B'a(2-13)) (Cyanobacteria bacterium Yellowstone B-Prime), this protein is Glycine cleavage system H protein.